Here is a 316-residue protein sequence, read N- to C-terminus: Probable cell division protein WhiA (316 aa).

Residues 280–313 (SLKELGEMLEPPVGKSGVNHRLRKIEKIAEELRT) constitute a DNA-binding region (H-T-H motif).

This sequence belongs to the WhiA family.

Involved in cell division and chromosome segregation. The protein is Probable cell division protein WhiA of Clostridium perfringens (strain 13 / Type A).